Consider the following 390-residue polypeptide: Elongation factor Tu 2 (390 aa).

The tr-type G domain maps to 10–203 (KPHLNIGTMG…AVDTYVPMPE (194 aa)). Residues 19 to 26 (GHVDHGKT) form a G1 region. 19-26 (GHVDHGKT) serves as a coordination point for GTP. Thr26 is a binding site for Mg(2+). The tract at residues 60–64 (GITIN) is G2. Residues 81-84 (DMPG) are G3. Residues 81–85 (DMPGH) and 136–139 (NKAD) contribute to the GTP site. Positions 136–139 (NKAD) are G4. Residues 173 to 175 (SGL) are G5.

The protein belongs to the TRAFAC class translation factor GTPase superfamily. Classic translation factor GTPase family. EF-Tu/EF-1A subfamily. As to quaternary structure, monomer.

The protein localises to the cytoplasm. The catalysed reaction is GTP + H2O = GDP + phosphate + H(+). Its function is as follows. GTP hydrolase that promotes the GTP-dependent binding of aminoacyl-tRNA to the A-site of ribosomes during protein biosynthesis. This is Elongation factor Tu 2 from Streptomyces avermitilis (strain ATCC 31267 / DSM 46492 / JCM 5070 / NBRC 14893 / NCIMB 12804 / NRRL 8165 / MA-4680).